Here is a 490-residue protein sequence, read N- to C-terminus: Pyridine nucleotide-disulfide oxidoreductase domain-containing protein 1 (490 aa).

It belongs to the class-I pyridine nucleotide-disulfide oxidoreductase family. PYROXD1 subfamily. FAD serves as cofactor.

It is found in the nucleus. The protein resides in the cytoplasm. It localises to the myofibril. The protein localises to the sarcomere. Its function is as follows. Probable FAD-dependent oxidoreductase; involved in the cellular oxidative stress response. Required for normal sarcomere structure and muscle fiber integrity. This Danio rerio (Zebrafish) protein is Pyridine nucleotide-disulfide oxidoreductase domain-containing protein 1 (pyroxd1).